The following is a 387-amino-acid chain: 3-ketoacyl-CoA thiolase (387 aa).

Catalysis depends on Cys91, which acts as the Acyl-thioester intermediate. Active-site proton acceptor residues include His343 and Cys373.

The protein belongs to the thiolase-like superfamily. Thiolase family. Heterotetramer of two alpha chains (FadB) and two beta chains (FadA).

It localises to the cytoplasm. It catalyses the reaction an acyl-CoA + acetyl-CoA = a 3-oxoacyl-CoA + CoA. It participates in lipid metabolism; fatty acid beta-oxidation. Its function is as follows. Catalyzes the final step of fatty acid oxidation in which acetyl-CoA is released and the CoA ester of a fatty acid two carbons shorter is formed. The chain is 3-ketoacyl-CoA thiolase from Escherichia fergusonii (strain ATCC 35469 / DSM 13698 / CCUG 18766 / IAM 14443 / JCM 21226 / LMG 7866 / NBRC 102419 / NCTC 12128 / CDC 0568-73).